The primary structure comprises 722 residues: Zinc finger BED domain-containing protein RICESLEEPER 2 (722 aa).

The BED-type zinc-finger motif lies at R66 to A134. The Zn(2+) site is built by C89, C92, H113, and H127. A disordered region spans residues V572 to P592. Polar residues predominate over residues D576 to P592. Residues E617–L702 form an HATC (Hobo-Ac-Tam3) domain region.

As to quaternary structure, homodimer.

The protein localises to the nucleus. Transposase-like protein that is essential for plant growth and development. May regulate global gene expression by recruiting other cellular factors. This Oryza sativa subsp. japonica (Rice) protein is Zinc finger BED domain-containing protein RICESLEEPER 2.